The primary structure comprises 116 residues: Iron-sulfur cluster assembly protein CyaY (116 aa).

It belongs to the frataxin family.

Functionally, involved in iron-sulfur (Fe-S) cluster assembly. May act as a regulator of Fe-S biogenesis. The chain is Iron-sulfur cluster assembly protein CyaY from Buchnera aphidicola subsp. Acyrthosiphon pisum (strain APS) (Acyrthosiphon pisum symbiotic bacterium).